Consider the following 361-residue polypeptide: MDSRKLGELRAFVRLCKQNPGLLHTEELGFLREWVESMGGTIPPAPASTSTDETSKGKAEEQPEEPVKSPEPESEESDLEIDNEGVIEPDNDDPQEMGDENVEVTEEMMDQANEKKMEAINALSEGDLQKAVNLFTDAIKLNPCLAILYAKRASVFVKLQKPNAAIRDCDRAIKINPDSAQTYKWRGKAHRLLGHWEEAAHDLALACKLDYDEDASAMLKEVQPRAQKIAEHRRKYERKREEKEIKERMERVKKAREEHERAQREEEARRQAGGAQFGGFPGGFPGGFPGAMPGGMPGMAGMPGLNEILSDPEVLAAMQDPEVMAAFQDVAQNPANMSKYQNNPKVMSLITKLSAKFGSKP.

Residues 39-98 (GGTIPPAPASTSTDETSKGKAEEQPEEPVKSPEPESEESDLEIDNEGVIEPDNDDPQEMG) form a disordered region. The span at 53–71 (ETSKGKAEEQPEEPVKSPE) shows a compositional bias: basic and acidic residues. The span at 72 to 98 (PESEESDLEIDNEGVIEPDNDDPQEMG) shows a compositional bias: acidic residues. TPR repeat units follow at residues 112-145 (ANEK…NPCL), 147-179 (ILYA…NPDS), and 181-213 (QTYK…DYDE). Positions 254–270 (KAREEHERAQREEEARR) are enriched in basic and acidic residues. The interval 254 to 292 (KAREEHERAQREEEARRQAGGAQFGGFPGGFPGGFPGAM) is disordered. Positions 275 to 292 (AQFGGFPGGFPGGFPGAM) are enriched in gly residues. An STI1 domain is found at 311 to 350 (DPEVLAAMQDPEVMAAFQDVAQNPANMSKYQNNPKVMSLI).

It belongs to the FAM10 family. In terms of assembly, homotetramer. Interacts with HSC70 as well as DNAJ homologs and HSP90.

It is found in the cytoplasm. Functionally, one HIP oligomer binds the ATPase domains of at least two HSC70 molecules dependent on activation of the HSC70 ATPase by HSP40. Stabilizes the ADP state of HSC70 that has a high affinity for substrate protein. Through its own chaperone activity, it may contribute to the interaction of HSC70 with various target proteins. The polypeptide is Hsc70-interacting protein (ST13) (Gallus gallus (Chicken)).